The chain runs to 103 residues: UPF0473 protein SSA_2239 (103 aa).

It belongs to the UPF0473 family.

The chain is UPF0473 protein SSA_2239 from Streptococcus sanguinis (strain SK36).